Consider the following 287-residue polypeptide: Glycine--tRNA ligase alpha subunit (287 aa).

Belongs to the class-II aminoacyl-tRNA synthetase family. Tetramer of two alpha and two beta subunits.

It is found in the cytoplasm. The catalysed reaction is tRNA(Gly) + glycine + ATP = glycyl-tRNA(Gly) + AMP + diphosphate. This is Glycine--tRNA ligase alpha subunit from Campylobacter jejuni subsp. jejuni serotype O:6 (strain 81116 / NCTC 11828).